Here is a 233-residue protein sequence, read N- to C-terminus: Lipoprotein-releasing system ATP-binding protein LolD (233 aa).

The 228-residue stretch at 6-233 folds into the ABC transporter domain; that stretch reads LQCDNLCKRY…TAELSLMGAE (228 aa). 42-49 is a binding site for ATP; the sequence is GSSGSGKS.

This sequence belongs to the ABC transporter superfamily. Lipoprotein translocase (TC 3.A.1.125) family. In terms of assembly, the complex is composed of two ATP-binding proteins (LolD) and two transmembrane proteins (LolC and LolE).

The protein resides in the cell inner membrane. In terms of biological role, part of the ABC transporter complex LolCDE involved in the translocation of mature outer membrane-directed lipoproteins, from the inner membrane to the periplasmic chaperone, LolA. Responsible for the formation of the LolA-lipoprotein complex in an ATP-dependent manner. This is Lipoprotein-releasing system ATP-binding protein LolD from Escherichia coli O6:K15:H31 (strain 536 / UPEC).